Here is a 634-residue protein sequence, read N- to C-terminus: MYDLLKTIDDPADLRRLDRRQLQPLADELRAFVLDSVSKTGGHLSSNLGTVELTIALHYVFNTPDDRIVWDVGHQTYPHKILTGRRDGMKTLRQFDGISGFPRRSESEYDTFGTAHSSTSISAALGMAIGSKLNGDDRFSIAVIGDGAMTAGMAFEAMNNAGVSEDAKLLVILNDNDMSISPPVGALNRHLARLMSGRFYAAARAGVERVLSVAPPVLELARKLEEHAKGMVVPATLFEEFGFNYIGPIDGHDLDSLIPTLQNIKELRGPQFLHVVTKKGQGYKLAEADPVLYHGPGKFNPAEGIKPSTTPAKKTYTQVFGEWLCDAAELDARVVGITPAMREGSGMVEFEKRFPERYYDVGIAEQHAVTFAGGLATEGLKPVVAIYSTFLQRAYDQLIHDVALQNLPVVFAIDRAGLVGADGATHAGAYDLAFLRCIPNMTVMAASDENECRQMLHTALQQPNPTAVRYPRGAGTGVATVKAFTEIPLGKGEVRRRTSQPDGKRIAILAFGTMVAPSLAAADALDATVANMRFVKPIDAELVQALARTHDYLVTVEEGCVMGGAGSACVEAMMESGAVRPVLQLGLPDRFVDHGDPAKLLSLCGLDGDGIAKSIRERFLSHAADVASPAKRVA.

Thiamine diphosphate contacts are provided by residues His74 and 115 to 117; that span reads AHS. Asp146 contributes to the Mg(2+) binding site. Thiamine diphosphate contacts are provided by residues 147 to 148, Asn176, Tyr283, and Glu365; that span reads GA. Residue Asn176 coordinates Mg(2+).

The protein belongs to the transketolase family. DXPS subfamily. In terms of assembly, homodimer. The cofactor is Mg(2+). Thiamine diphosphate serves as cofactor.

It carries out the reaction D-glyceraldehyde 3-phosphate + pyruvate + H(+) = 1-deoxy-D-xylulose 5-phosphate + CO2. Its pathway is metabolic intermediate biosynthesis; 1-deoxy-D-xylulose 5-phosphate biosynthesis; 1-deoxy-D-xylulose 5-phosphate from D-glyceraldehyde 3-phosphate and pyruvate: step 1/1. Catalyzes the acyloin condensation reaction between C atoms 2 and 3 of pyruvate and glyceraldehyde 3-phosphate to yield 1-deoxy-D-xylulose-5-phosphate (DXP). The sequence is that of 1-deoxy-D-xylulose-5-phosphate synthase from Burkholderia mallei (strain ATCC 23344).